Reading from the N-terminus, the 390-residue chain is NADH-quinone oxidoreductase subunit D (390 aa).

Belongs to the complex I 49 kDa subunit family. As to quaternary structure, NDH-1 is composed of 14 different subunits. Subunits NuoB, C, D, E, F, and G constitute the peripheral sector of the complex.

Its subcellular location is the cell inner membrane. It carries out the reaction a quinone + NADH + 5 H(+)(in) = a quinol + NAD(+) + 4 H(+)(out). Functionally, NDH-1 shuttles electrons from NADH, via FMN and iron-sulfur (Fe-S) centers, to quinones in the respiratory chain. The immediate electron acceptor for the enzyme in this species is believed to be ubiquinone. Couples the redox reaction to proton translocation (for every two electrons transferred, four hydrogen ions are translocated across the cytoplasmic membrane), and thus conserves the redox energy in a proton gradient. This Geobacter metallireducens (strain ATCC 53774 / DSM 7210 / GS-15) protein is NADH-quinone oxidoreductase subunit D.